We begin with the raw amino-acid sequence, 201 residues long: Holliday junction resolvase RecU (201 aa).

Mg(2+)-binding residues include threonine 87, aspartate 89, glutamate 102, and glutamine 121.

This sequence belongs to the RecU family. The cofactor is Mg(2+).

It localises to the cytoplasm. It carries out the reaction Endonucleolytic cleavage at a junction such as a reciprocal single-stranded crossover between two homologous DNA duplexes (Holliday junction).. Its function is as follows. Endonuclease that resolves Holliday junction intermediates in genetic recombination. Cleaves mobile four-strand junctions by introducing symmetrical nicks in paired strands. Promotes annealing of linear ssDNA with homologous dsDNA. Required for DNA repair, homologous recombination and chromosome segregation. This chain is Holliday junction resolvase RecU, found in Listeria monocytogenes serotype 4b (strain F2365).